Consider the following 92-residue polypeptide: Small nuclear ribonucleoprotein E (92 aa).

Positions 18-92 (INLIFRYLQN…NITLLQSVSN (75 aa)) constitute a Sm domain.

Belongs to the snRNP Sm proteins family. Core component of the spliceosomal U1, U2, U4 and U5 small nuclear ribonucleoproteins (snRNPs), the building blocks of the spliceosome. Most spliceosomal snRNPs contain a common set of Sm proteins, SNRPB, SNRPD1, SNRPD2, SNRPD3, SNRPE, SNRPF and SNRPG that assemble in a heptameric protein ring on the Sm site of the small nuclear RNA to form the core snRNP. Component of the U1 snRNP. The U1 snRNP is composed of the U1 snRNA and the 7 core Sm proteins SNRPB, SNRPD1, SNRPD2, SNRPD3, SNRPE, SNRPF and SNRPG, and at least three U1 snRNP-specific proteins SNRNP70/U1-70K, SNRPA/U1-A and SNRPC/U1-C. Component of the U4/U6-U5 tri-snRNP complex composed of the U4, U6 and U5 snRNAs and at least PRPF3, PRPF4, PRPF6, PRPF8, PRPF31, SNRNP200, TXNL4A, SNRNP40, SNRPB, SNRPD1, SNRPD2, SNRPD3, SNRPE, SNRPF, SNRPG, DDX23, CD2BP2, PPIH, SNU13, EFTUD2, SART1 and USP39, plus LSM2, LSM3, LSM4, LSM5, LSM6, LSM7 and LSM8. Component of the U7 snRNP complex, or U7 Sm protein core complex, that is composed of the U7 snRNA and at least LSM10, LSM11, SNRPB, SNRPD3, SNRPE, SNRPF and SNRPG; the complex does not contain SNRPD1 and SNRPD2. Component of the minor spliceosome, which splices U12-type introns. Part of the SMN-Sm complex that contains SMN1, GEMIN2/SIP1, DDX20/GEMIN3, GEMIN4, GEMIN5, GEMIN6, GEMIN7, GEMIN8, STRAP/UNRIP and the Sm proteins SNRPB, SNRPD1, SNRPD2, SNRPD3, SNRPE, SNRPF and SNRPG; catalyzes core snRNPs assembly. Forms a 6S pICln-Sm complex composed of CLNS1A/pICln, SNRPD1, SNRPD2, SNRPE, SNRPF and SNRPG; ring-like structure where CLNS1A/pICln mimics additional Sm proteins and which is unable to assemble into the core snRNP. Interacts with SMN1; the interaction is direct. Interacts with GEMIN2 (via N-terminus); the interaction is direct. Interacts with SNRPF; the interaction is direct. Interacts with SNRPG; the interaction is direct.

Its subcellular location is the cytoplasm. It is found in the cytosol. The protein localises to the nucleus. Plays a role in pre-mRNA splicing as a core component of the spliceosomal U1, U2, U4 and U5 small nuclear ribonucleoproteins (snRNPs), the building blocks of the spliceosome. Component of both the pre-catalytic spliceosome B complex and activated spliceosome C complexes. As a component of the minor spliceosome, involved in the splicing of U12-type introns in pre-mRNAs. As part of the U7 snRNP it is involved in histone 3'-end processing. The protein is Small nuclear ribonucleoprotein E (SNRPE) of Sus scrofa (Pig).